The primary structure comprises 393 residues: S-adenosylmethionine synthase (393 aa).

Position 16 (His16) interacts with ATP. Position 18 (Asp18) interacts with Mg(2+). Glu44 contributes to the K(+) binding site. Glu57 and Gln100 together coordinate L-methionine. A flexible loop region spans residues 100–110 (QSNDIAQGVDQ). ATP is bound by residues 167–169 (DAK), 238–239 (RF), Asp247, 253–254 (RK), Ala270, and Lys274. An L-methionine-binding site is contributed by Asp247. Lys278 lines the L-methionine pocket.

It belongs to the AdoMet synthase family. Homotetramer; dimer of dimers. It depends on Mg(2+) as a cofactor. The cofactor is K(+).

It is found in the cytoplasm. It carries out the reaction L-methionine + ATP + H2O = S-adenosyl-L-methionine + phosphate + diphosphate. It participates in amino-acid biosynthesis; S-adenosyl-L-methionine biosynthesis; S-adenosyl-L-methionine from L-methionine: step 1/1. In terms of biological role, catalyzes the formation of S-adenosylmethionine (AdoMet) from methionine and ATP. The overall synthetic reaction is composed of two sequential steps, AdoMet formation and the subsequent tripolyphosphate hydrolysis which occurs prior to release of AdoMet from the enzyme. The protein is S-adenosylmethionine synthase of Methylibium petroleiphilum (strain ATCC BAA-1232 / LMG 22953 / PM1).